A 371-amino-acid polypeptide reads, in one-letter code: Queuine tRNA-ribosyltransferase (371 aa).

Catalysis depends on Asp-93, which acts as the Proton acceptor. Residues 93–97, Asp-147, Gln-191, and Gly-218 each bind substrate; that span reads DSGGF. The RNA binding stretch occupies residues 249-255; the sequence is GVGTPLD. Asp-268 serves as the catalytic Nucleophile. The RNA binding; important for wobble base 34 recognition stretch occupies residues 273 to 277; the sequence is TRNAR. Residues Cys-306, Cys-308, Cys-311, and His-337 each contribute to the Zn(2+) site.

It belongs to the queuine tRNA-ribosyltransferase family. In terms of assembly, homodimer. Within each dimer, one monomer is responsible for RNA recognition and catalysis, while the other monomer binds to the replacement base PreQ1. Zn(2+) is required as a cofactor.

The catalysed reaction is 7-aminomethyl-7-carbaguanine + guanosine(34) in tRNA = 7-aminomethyl-7-carbaguanosine(34) in tRNA + guanine. The protein operates within tRNA modification; tRNA-queuosine biosynthesis. Catalyzes the base-exchange of a guanine (G) residue with the queuine precursor 7-aminomethyl-7-deazaguanine (PreQ1) at position 34 (anticodon wobble position) in tRNAs with GU(N) anticodons (tRNA-Asp, -Asn, -His and -Tyr). Catalysis occurs through a double-displacement mechanism. The nucleophile active site attacks the C1' of nucleotide 34 to detach the guanine base from the RNA, forming a covalent enzyme-RNA intermediate. The proton acceptor active site deprotonates the incoming PreQ1, allowing a nucleophilic attack on the C1' of the ribose to form the product. After dissociation, two additional enzymatic reactions on the tRNA convert PreQ1 to queuine (Q), resulting in the hypermodified nucleoside queuosine (7-(((4,5-cis-dihydroxy-2-cyclopenten-1-yl)amino)methyl)-7-deazaguanosine). The polypeptide is Queuine tRNA-ribosyltransferase (Lawsonia intracellularis (strain PHE/MN1-00)).